Reading from the N-terminus, the 345-residue chain is Aspartate--ammonia ligase (345 aa).

This sequence belongs to the class-II aminoacyl-tRNA synthetase family. AsnA subfamily.

The protein localises to the cytoplasm. The catalysed reaction is L-aspartate + NH4(+) + ATP = L-asparagine + AMP + diphosphate + H(+). It participates in amino-acid biosynthesis; L-asparagine biosynthesis; L-asparagine from L-aspartate (ammonia route): step 1/1. The protein is Aspartate--ammonia ligase of Bacteroides fragilis (strain ATCC 25285 / DSM 2151 / CCUG 4856 / JCM 11019 / LMG 10263 / NCTC 9343 / Onslow / VPI 2553 / EN-2).